Reading from the N-terminus, the 576-residue chain is Probable lysosomal cobalamin transporter (576 aa).

A run of 10 helical transmembrane segments spans residues 8-28, 40-60, 98-118, 145-165, 188-208, 312-332, 347-367, 377-397, 419-439, and 503-523; these read LIWA…SVFI, VVTF…LLLP, YLLY…VYFW, TISF…VPVA, VLTF…ILYT, LLGG…MLLT, GYIL…VQSA, LTVV…TIGI, LTTA…PMLV, and FFGT…LLVL. Residues 549–576 form a disordered region; the sequence is RLLTSSARGVGDTYQSVGGRNNFSTRAG. A compositionally biased stretch (polar residues) spans 561–576; the sequence is TYQSVGGRNNFSTRAG. N-linked (GlcNAc...) asparagine glycosylation occurs at Asn570.

Belongs to the LIMR family. LMBRD1 subfamily.

The protein resides in the lysosome membrane. Its function is as follows. Probable lysosomal cobalamin transporter. Required to export cobalamin from lysosomes allowing its conversion to cofactors. In Aspergillus niger (strain ATCC MYA-4892 / CBS 513.88 / FGSC A1513), this protein is Probable lysosomal cobalamin transporter.